The primary structure comprises 113 residues: Non-specific lipid-transfer protein 6 (113 aa).

Residues 1-19 (MRSLLLAVCLVLALHCGEA) form the signal peptide. Disulfide bonds link C23/C70, C33/C47, C48/C95, and C68/C109.

Belongs to the plant LTP family.

In terms of biological role, plant non-specific lipid-transfer proteins transfer phospholipids as well as galactolipids across membranes. May play a role in wax or cutin deposition in the cell walls of expanding epidermal cells and certain secretory tissues. This Arabidopsis thaliana (Mouse-ear cress) protein is Non-specific lipid-transfer protein 6 (LTP6).